Consider the following 864-residue polypeptide: MHERYVPADVEAAAQSDWRAADAYRSKEDANRKKFYCVSMLPYPSGKLHMGHVRNYTINDVMYRYLRMNGYNTLMPMGWDAFGMPAENAAMANGVPPAQWTYENIAYMKKQMQSMGLAIDWSREVTTCKPDYYKWNQWLFLKMLEKGVAYKKTGTVNWDPVDQTVLANEQVIDGRGWRSGALVEKREIPMYYMRITQYADELLNDLDGLGWPERVKVMQHNWIGKSFGVNFGFPYELDGEKKLLRVFTTRADTIMGVTFCAIAAEHPLAARLARDKPALQAFIDECKRGGVAEADIATMEKKGVATGFSVSHPLTGEPVEVWIGNYVLMSYGEGAVMGVPAHDERDFAFAKKYGLPIRQVIAVEGETYSTDAWQEWYGDKTRAVCVNSGKYDGLAHDAAVDAIAAELKAGGLGDKQITYRLRDWGISRQRYWGTPIPIIHCPSCGDVPVPEQDLPVVLPEDLVPDGTGNPLAKSDAFLNCTCPKCGAAAKRETDTMDTFVDSAWYFSRYAAPDAQTMVDARTDYWMPMDQYIGGIEHAILHLLYSRFWAKVMRDLGLVAFGEPAKNLLTQGMVLNETFYREDAAGKKTWYNPADVTVSFDDKGRPVGAVLKSDGQPVELGGIEKMSKSKNNGVDPQMLIDHYGADTARLFTMFAAPPEQQLEWSGAGVDGASRFLRRVWAFGFANREALAVRAPFDAAQLAEADKTLRREIHGVLKQADFDYQRLQYNTVVSAAMKMLNAIEGAKGSTPAVLRETYGVLLRVLYPVVPHVTFELWKALGYADEFGPLLDAPWPKVDEAALEQAEIELVLQVNGKVRGALKVAKDASREAIEAAAVADEMFAKFAEGRPAKKIIVVPGRLVNVVV.

Residues 42 to 52 carry the 'HIGH' region motif; the sequence is PYPSGKLHMGH. The 'KMSKS' region signature appears at 624-628; that stretch reads KMSKS. Residue Lys627 participates in ATP binding.

Belongs to the class-I aminoacyl-tRNA synthetase family.

The protein localises to the cytoplasm. The catalysed reaction is tRNA(Leu) + L-leucine + ATP = L-leucyl-tRNA(Leu) + AMP + diphosphate. This is Leucine--tRNA ligase from Burkholderia pseudomallei (strain 1710b).